Consider the following 301-residue polypeptide: Tegument protein VP22 (301 aa).

The interval 1-171 (MTSRRSVKSG…PTRSKTPAQG (171 aa)) is disordered. Residues 113 to 124 (RTPTTAPRAPRT) are compositionally biased toward low complexity. Positions 163–166 (TRSK) match the Nuclear localization signal motif. The tract at residues 174–267 (RKLHFSTAPP…LVNPDVVQDV (94 aa)) is interaction with gE. Residues 232 to 244 (LNELLGITTIRVT) carry the Nuclear export signal motif. Over residues 269–281 (AATATRGRSAASR) the composition is skewed to low complexity. A disordered region spans residues 269-301 (AATATRGRSAASRPTERPRAPARSASRPRRPVE).

The protein belongs to the alphaherpesvirinae VP22 tegument protein family. In terms of assembly, interacts with gE (via C-terminus); this interaction is necessary for the recruitment of VP22 to the Golgi and its packaging into virions. Interacts with gM (via C-terminus). Interacts with VP16; this interaction allows the formation of a tripartite complex composed of VP16, VP22 and UL41/VHS. According to a report interacts with gD (via C-terminus). According another publication, does not interact with gD. Interacts with host CGAS. Interacts with host SET; this interaction may interfere with SET-mediated nucleosomal deposition onto the viral genome. Interacts with the capsid-binding protein UL16. Highly phosphorylated in the host cell. Packaging is selective for underphosphorylated forms.

The protein resides in the virion tegument. It localises to the host cytoplasm. It is found in the host nucleus. The protein localises to the host Golgi apparatus. Its function is as follows. Tegument protein that plays different roles during the time course of infection. Participates in both the accumulation of viral mRNAs and viral protein translation at late time of infection. Modulates the RNase activity of the virion host shutoff protein UL41 probably to ensure necessary levels of key cellular mRNAs and proteins. Plays a role in microtubule reorganization that occurs after viral infection by stabilizing microtubule network. Finally, may prevent nucleosomal deposition onto the viral genome by interacting with and inhibiting host SET. Plays a role in the inhibition of host innate immune system by targeting the CGAS enzymatic activity which is the principal cytosolic DNA sensor that detects invading viral DNA. Acts by mediating disruption of liquid-like droplets in which CGAS is activated, thereby preventing CGAS activity. The protein is Tegument protein VP22 of Human herpesvirus 1 (strain 17) (HHV-1).